We begin with the raw amino-acid sequence, 648 residues long: DNA gyrase subunit B (648 aa).

One can recognise a Toprim domain in the interval T427–P541. Mg(2+)-binding residues include E433, D506, and D508.

This sequence belongs to the type II topoisomerase GyrB family. In terms of assembly, heterotetramer, composed of two GyrA and two GyrB chains. In the heterotetramer, GyrA contains the active site tyrosine that forms a transient covalent intermediate with DNA, while GyrB binds cofactors and catalyzes ATP hydrolysis. The cofactor is Mg(2+). Requires Mn(2+) as cofactor. It depends on Ca(2+) as a cofactor.

The protein resides in the cytoplasm. It carries out the reaction ATP-dependent breakage, passage and rejoining of double-stranded DNA.. Its function is as follows. A type II topoisomerase that negatively supercoils closed circular double-stranded (ds) DNA in an ATP-dependent manner to modulate DNA topology and maintain chromosomes in an underwound state. Negative supercoiling favors strand separation, and DNA replication, transcription, recombination and repair, all of which involve strand separation. Also able to catalyze the interconversion of other topological isomers of dsDNA rings, including catenanes and knotted rings. Type II topoisomerases break and join 2 DNA strands simultaneously in an ATP-dependent manner. The chain is DNA gyrase subunit B from Streptococcus pneumoniae serotype 4 (strain ATCC BAA-334 / TIGR4).